The chain runs to 417 residues: Gamma-glutamyl phosphate reductase (417 aa).

It belongs to the gamma-glutamyl phosphate reductase family.

Its subcellular location is the cytoplasm. It carries out the reaction L-glutamate 5-semialdehyde + phosphate + NADP(+) = L-glutamyl 5-phosphate + NADPH + H(+). It functions in the pathway amino-acid biosynthesis; L-proline biosynthesis; L-glutamate 5-semialdehyde from L-glutamate: step 2/2. Its function is as follows. Catalyzes the NADPH-dependent reduction of L-glutamate 5-phosphate into L-glutamate 5-semialdehyde and phosphate. The product spontaneously undergoes cyclization to form 1-pyrroline-5-carboxylate. In Erwinia tasmaniensis (strain DSM 17950 / CFBP 7177 / CIP 109463 / NCPPB 4357 / Et1/99), this protein is Gamma-glutamyl phosphate reductase.